Consider the following 241-residue polypeptide: Aliphatic sulfonates import ATP-binding protein SsuB (241 aa).

An ABC transporter domain is found at 10-226 (VHLHGFSRSF…RPDHPAFMQL (217 aa)). 42–49 (GESGSGKT) is an ATP binding site.

This sequence belongs to the ABC transporter superfamily. Aliphatic sulfonates importer (TC 3.A.1.17.2) family. In terms of assembly, the complex is composed of two ATP-binding proteins (SsuB), two transmembrane proteins (SsuC) and a solute-binding protein (SsuA).

The protein resides in the cell inner membrane. It carries out the reaction ATP + H2O + aliphatic sulfonate-[sulfonate-binding protein]Side 1 = ADP + phosphate + aliphatic sulfonateSide 2 + [sulfonate-binding protein]Side 1.. Its function is as follows. Part of the ABC transporter complex SsuABC involved in aliphatic sulfonates import. Responsible for energy coupling to the transport system. The polypeptide is Aliphatic sulfonates import ATP-binding protein SsuB (Delftia acidovorans (Pseudomonas acidovorans)).